Here is a 468-residue protein sequence, read N- to C-terminus: 6-phospho-beta-galactosidase (468 aa).

Glutamine 19, histidine 116, asparagine 159, glutamate 160, and asparagine 297 together coordinate D-galactose 6-phosphate. Glutamate 160 (proton donor) is an active-site residue. Glutamate 375 serves as the catalytic Nucleophile. Positions 428, 429, 435, and 437 each coordinate D-galactose 6-phosphate.

It belongs to the glycosyl hydrolase 1 family.

It catalyses the reaction a 6-phospho-beta-D-galactoside + H2O = D-galactose 6-phosphate + an alcohol. It functions in the pathway carbohydrate metabolism; lactose degradation; D-galactose 6-phosphate and beta-D-glucose from lactose 6-phosphate: step 1/1. The polypeptide is 6-phospho-beta-galactosidase (Streptococcus pyogenes serotype M18 (strain MGAS8232)).